A 50-amino-acid chain; its full sequence is Penaeidin-1 (50 aa).

3 disulfide bridges follow: Cys-25–Cys-38, Cys-27–Cys-45, and Cys-39–Cys-46.

As to expression, higher expression in hemocytes and to a lesser extent in heart, testis, gills, intestine, lymphoid organ and hepatopancreas. Traces in eyes and subcuticular epithelium. Not present in the brain.

The protein resides in the cytoplasmic granule. In terms of biological role, antibacterial activity against M.luteus and E.coli bacteria. Antifungal activity against N.crassa and F.oxysporum. Presents chitin-binding activity. This Penaeus vannamei (Whiteleg shrimp) protein is Penaeidin-1.